The following is a 504-amino-acid chain: Sodium-coupled neutral amino acid transporter 3 (504 aa).

The N-linked (GlcNAc...) asparagine glycan is linked to Asn74. 5 helical membrane-spanning segments follow: residues 83-103 (GILG…LFLL), 106-126 (VALL…VVGI), 144-164 (AAAL…LYII), 187-207 (MNGN…LALM), and 213-233 (LGYS…AVIY). The cysteines at positions 240 and 275 are disulfide-linked. Residues Asn247, Asn248, Asn252, and Asn323 are each glycosylated (N-linked (GlcNAc...) asparagine). 5 consecutive transmembrane segments (helical) span residues 324–344 (LSIA…YLTF), 366–386 (ILCV…IVLF), 408–428 (VLIA…APNI), 431–451 (IFGV…PAIF), and 471–491 (ALCF…FIII).

It belongs to the amino acid/polyamine transporter 2 family.

It is found in the cell membrane. It localises to the basolateral cell membrane. It catalyses the reaction L-glutamine(out) + Na(+)(out) + H(+)(in) = L-glutamine(in) + Na(+)(in) + H(+)(out). The enzyme catalyses L-asparagine(out) + Na(+)(out) + H(+)(in) = L-asparagine(in) + Na(+)(in) + H(+)(out). The catalysed reaction is L-histidine(out) + Na(+)(out) + H(+)(in) = L-histidine(in) + Na(+)(in) + H(+)(out). Its function is as follows. Symporter that cotransports specific neutral amino acids and sodium ions, coupled to an H(+) antiporter activity. Mainly participates in the glutamate-GABA-glutamine cycle in brain where it transports L-glutamine from astrocytes in the intercellular space for the replenishment of both neurotransmitters glutamate and gamma-aminobutyric acid (GABA) in neurons and also functions as the major influx transporter in ganglion cells mediating the uptake of glutamine. The transport activity is specific for L-glutamine, L-histidine and L-asparagine. The transport is electroneutral coupled to the cotransport of 1 Na(+) and the antiport of 1 H(+). The transport is pH dependent, saturable, Li(+) tolerant and functions in both direction depending on the concentration gradients of its substrates and cotransported ions. Also mediates an amino acid-gated H(+) conductance that is not stoichiometrically coupled to the amino acid transport but which influences the ionic gradients that drive the amino acid transport. In addition, may play a role in nitrogen metabolism, amino acid homeostasis, glucose metabolism and renal ammoniagenesis. The chain is Sodium-coupled neutral amino acid transporter 3 from Homo sapiens (Human).